A 314-amino-acid chain; its full sequence is uncharacterized protein (314 aa).

The interval 39–146 is disordered; that stretch reads QENVDSDSTD…SDYSSDESNS (108 aa). A compositionally biased stretch (polar residues) spans 56-76; the sequence is STKNVSRNIPKNIPKSISKNI. Residues 88-131 show a composition bias toward low complexity; it reads IPKNVSKNIPKNVPKNVSKNIPKNIPKNVPNKSRNKYSNYSEDS. The segment covering 132–141 has biased composition (acidic residues); the sequence is NYSEDSDYSS.

This is an uncharacterized protein from Acanthamoeba polyphaga mimivirus (APMV).